The chain runs to 120 residues: Cytochrome c-550 (120 aa).

Residues 5–25 (PLIPFLLIAVLGIGLTFFLSV) traverse the membrane as a helical segment. Residues 26 to 120 (KGLDDSREIA…DMAEWVSKIK (95 aa)) lie on the Periplasmic side of the membrane. Heme c is bound by residues cysteine 60, cysteine 63, histidine 64, and methionine 99.

In terms of processing, binds 1 heme c group covalently per subunit.

The protein resides in the cell membrane. Not essential for growth on minimal or rich media. The protein is Cytochrome c-550 (cccA) of Bacillus subtilis (strain 168).